The chain runs to 605 residues: MSQSSVRNFCIIAHIDHGKSTLADRLIEMTGTLRHDEMCEQVMDSMELERERGITIKAKAIRLRYISKDKQEYRLNLIDTPGHVDFSYEVSRTIAACEGAILVIDATQGIQAQTLANVYLAIEYNLEIIPVINKIDLPGADIPRVMGEIKSVLGYDEDSVLQISAKLGLGVPELLEAIVNKVPAPKGNANQPLRALIFDSHYDPYKGVVAYLRVADGNINKGDDLRLMGQGTEFRVLEAGYFAPAQVAALRLDVGDVGYIATGLKSVGECRVGDTVTLQHGGAIQPLIGYHPAKAMVFAGIYPTQTDDYHELREAMEKLSLNDASLSSEPESSPLLGHGFRCGFLGLLHLDIIVERLEREFNLSLVVTSPGVSLTVTRIGGEAFTVVNPNEMPLPHEIARIEEPWVSVVIITPSKYIGTVMDLVRENYGVYKNTEYLGQLAMSELGQRVQLHYDMPLRSILTTFHDQLKSRTQGYASLDYEFIGYRDANLSKIDVLVNDVPVDAFSRIIPPDKAHEIGEALVKKLKEMIPRQLYQVTLQAAIGSKIVARADISAKRKDVIAKCYGGDITRKRKLLDKQKEGKKKMRQIGKVEVPKEAFLSVLKLQ.

A tr-type G domain is found at 4–186; sequence SSVRNFCIIA…AIVNKVPAPK (183 aa). GTP is bound by residues 16-21 and 133-136; these read DHGKST and NKID.

The protein belongs to the TRAFAC class translation factor GTPase superfamily. Classic translation factor GTPase family. LepA subfamily.

It localises to the cell membrane. It catalyses the reaction GTP + H2O = GDP + phosphate + H(+). Functionally, required for accurate and efficient protein synthesis under certain stress conditions. May act as a fidelity factor of the translation reaction, by catalyzing a one-codon backward translocation of tRNAs on improperly translocated ribosomes. Back-translocation proceeds from a post-translocation (POST) complex to a pre-translocation (PRE) complex, thus giving elongation factor G a second chance to translocate the tRNAs correctly. Binds to ribosomes in a GTP-dependent manner. In Dehalococcoides mccartyi (strain ATCC BAA-2100 / JCM 16839 / KCTC 5957 / BAV1), this protein is Elongation factor 4.